The chain runs to 108 residues: uncharacterized protein (108 aa).

Transmembrane regions (helical) follow at residues 10 to 32 (SLCYFSVFIAPIIVPIVAYFVVN), 45 to 67 (ISHIVPFVGWLFLFIALLGGAVA), and 77 to 99 (FVIIGGAVIYFLVVIGIIIWNVI).

The protein localises to the cell membrane. This is an uncharacterized protein from Bacillus subtilis (strain 168).